An 88-amino-acid polypeptide reads, in one-letter code: Sigma-conotoxin GVIIIA (88 aa).

The N-terminal stretch at 1-20 (MMSKMGAMFVLLLLFTLASS) is a signal peptide. Positions 21–46 (LQEGDVQARKTRLKSDFYRALARDDR) are excised as a propeptide. Pro55 is modified (4-hydroxyproline). Position 80 is a 6'-bromotryptophan (Trp80). Ser87 bears the Serine amide mark.

This sequence belongs to the conotoxin S superfamily. Post-translationally, contains 5 disulfide bonds. In terms of tissue distribution, expressed by the venom duct.

Its subcellular location is the secreted. Sigma-conotoxins bind and inhibit serotonin-gated ion channels. This peptide selectively and reversibly inhibits 5-hydroxytryptamine 3 receptor (HTR3A) through competitive antagonism (IC(50)=53-86.8 nM). This chain is Sigma-conotoxin GVIIIA, found in Conus geographus (Geography cone).